The following is an 87-amino-acid chain: Cell division topological specificity factor (87 aa).

It belongs to the MinE family.

In terms of biological role, prevents the cell division inhibition by proteins MinC and MinD at internal division sites while permitting inhibition at polar sites. This ensures cell division at the proper site by restricting the formation of a division septum at the midpoint of the long axis of the cell. This is Cell division topological specificity factor from Acidiphilium cryptum (strain JF-5).